A 465-amino-acid polypeptide reads, in one-letter code: Protein hedgehog (465 aa).

Cysteine 79 carries N-palmitoyl cysteine lipidation. The Ca(2+) site is built by glutamate 143, glutamate 144, aspartate 149, threonine 179, glutamate 180, aspartate 183, and aspartate 185. Glycine 251 carries Cholesterol glycine ester lipidation.

The protein belongs to the hedgehog family. In terms of assembly, interacts with shf. In terms of processing, the C-terminal part of the hedgehog protein precursor displays an autoproteolysis activity that results in the cleavage of the full-length protein into two parts (N-product and C-product). In addition, the C-terminal part displays a cholesterol transferase activity that results by the covalent attachment of a cholesterol moiety to the C-terminal of the newly generated N-product. The N-product is the active species in both local and long-range signaling, whereas the C-product has no signaling activity. Cholesterylation is required for N-product targeting to lipid rafts and multimerization. Post-translationally, N-palmitoylation by Rasp of the hedgehog N-product, within the secretory pathway, is required for the embryonic and larval patterning activities of the hedgehog signal.

Its subcellular location is the nucleus. It localises to the cytoplasm. It is found in the cell membrane. The enzyme catalyses glycyl-L-cysteinyl-[protein] + cholesterol + H(+) = [protein]-C-terminal glycyl cholesterol ester + N-terminal L-cysteinyl-[protein]. The C-terminal part of the hedgehog protein precursor displays an autoproteolysis activity that results in the cleavage of the full-length protein into two parts (N-product and C-product). In addition, the C-terminal part displays a cholesterol transferase activity that results by the covalent attachment of a cholesterol moiety to the C-terminal of the newly generated N-product. Once cleaved, the C-product has no signaling activity and diffuses from the cell. Functionally, the dually lipidated hedgehog protein N-product is a morphogen which is essential for a variety of patterning events during development. Establishes the anterior-posterior axis of the embryonic segments and patterns the larval imaginal disks. Binds to the patched (ptc) receptor, which functions in association with smoothened (smo), to activate the transcription of target genes wingless (wg), decapentaplegic (dpp) and ptc. In the absence of hh, ptc represses the constitutive signaling activity of smo through fused (fu). Essential component of a signaling pathway which regulates the Duox-dependent gut immune response to bacterial uracil; required to activate Cad99C-dependent endosome formation, norpA-dependent Ca2+ mobilization and p38 MAPK, which are essential steps in the Duox-dependent production of reactive oxygen species (ROS) in response to intestinal bacterial infection. During photoreceptor differentiation, it up-regulates transcription of Ubr3, which in turn promotes the hh-signaling pathway by mediating the ubiquitination and degradation of cos. This chain is Protein hedgehog, found in Drosophila yakuba (Fruit fly).